We begin with the raw amino-acid sequence, 46 residues long: Iota-conotoxin-like R11.7 (46 aa).

A 4-hydroxyproline mark is found at P2 and P11. Cystine bridges form between C5/C19, C12/C22, C18/C27, and C21/C38. P29 is subject to 4-hydroxyproline. At F44 the chain carries D-phenylalanine.

This sequence belongs to the conotoxin I1 superfamily. Expressed by the venom duct.

The protein resides in the secreted. In terms of biological role, iota-conotoxins bind to voltage-gated sodium channels (Nav) and act as agonists by shifting the voltage-dependence of activation to more hyperpolarized levels. Produces general excitatory symptoms. The polypeptide is Iota-conotoxin-like R11.7 (Conus radiatus (Rayed cone)).